The chain runs to 93 residues: Putative pterin-4-alpha-carbinolamine dehydratase (93 aa).

It belongs to the pterin-4-alpha-carbinolamine dehydratase family.

It catalyses the reaction (4aS,6R)-4a-hydroxy-L-erythro-5,6,7,8-tetrahydrobiopterin = (6R)-L-erythro-6,7-dihydrobiopterin + H2O. In Synechococcus sp. (strain WH7803), this protein is Putative pterin-4-alpha-carbinolamine dehydratase.